Consider the following 365-residue polypeptide: Putative tRNA 2'-phosphotransferase (365 aa).

Disordered stretches follow at residues methionine 1–arginine 35 and leucine 231–isoleucine 254. Residues serine 17–lysine 27 are compositionally biased toward low complexity.

It belongs to the KptA/TPT1 family.

The enzyme catalyses 2'-phospho-[ligated tRNA] + NAD(+) = mature tRNA + ADP-alpha-D-ribose 1'',2''-cyclic phosphate + nicotinamide. Functionally, catalyzes the last step of tRNA splicing, the transfer of the splice junction 2'-phosphate from ligated tRNA to NAD to produce ADP-ribose 1''-2'' cyclic phosphate. The polypeptide is Putative tRNA 2'-phosphotransferase (Schizosaccharomyces pombe (strain 972 / ATCC 24843) (Fission yeast)).